The sequence spans 89 residues: Small ribosomal subunit protein uS17 (89 aa).

Belongs to the universal ribosomal protein uS17 family. Part of the 30S ribosomal subunit.

One of the primary rRNA binding proteins, it binds specifically to the 5'-end of 16S ribosomal RNA. This Bdellovibrio bacteriovorus (strain ATCC 15356 / DSM 50701 / NCIMB 9529 / HD100) protein is Small ribosomal subunit protein uS17.